Here is a 35-residue protein sequence, read N- to C-terminus: Photosystem II reaction center protein M (35 aa).

Residues 7-27 (GFIATILFVLVPTVFLLILYI) traverse the membrane as a helical segment.

The protein belongs to the PsbM family. As to quaternary structure, PSII is composed of 1 copy each of membrane proteins PsbA, PsbB, PsbC, PsbD, PsbE, PsbF, PsbH, PsbI, PsbJ, PsbK, PsbL, PsbM, PsbT, PsbX, PsbY, PsbZ, Psb30/Ycf12, peripheral proteins PsbO, CyanoQ (PsbQ), PsbU, PsbV and a large number of cofactors. It forms dimeric complexes.

It is found in the cellular thylakoid membrane. In terms of biological role, one of the components of the core complex of photosystem II (PSII). PSII is a light-driven water:plastoquinone oxidoreductase that uses light energy to abstract electrons from H(2)O, generating O(2) and a proton gradient subsequently used for ATP formation. It consists of a core antenna complex that captures photons, and an electron transfer chain that converts photonic excitation into a charge separation. This subunit is found at the monomer-monomer interface. This chain is Photosystem II reaction center protein M, found in Gloeothece citriformis (strain PCC 7424) (Cyanothece sp. (strain PCC 7424)).